The sequence spans 644 residues: Threonine--tRNA ligase (644 aa).

Positions 1–61 constitute a TGS domain; it reads MPVITLPDGS…EKDTKLTIIT (61 aa). Residues 242 to 535 form a catalytic region; sequence DHRRIGADLD…LIEHYEGKFP (294 aa). Zn(2+)-binding residues include Cys-335, His-386, and His-512.

This sequence belongs to the class-II aminoacyl-tRNA synthetase family. In terms of assembly, homodimer. The cofactor is Zn(2+).

It localises to the cytoplasm. The enzyme catalyses tRNA(Thr) + L-threonine + ATP = L-threonyl-tRNA(Thr) + AMP + diphosphate + H(+). In terms of biological role, catalyzes the attachment of threonine to tRNA(Thr) in a two-step reaction: L-threonine is first activated by ATP to form Thr-AMP and then transferred to the acceptor end of tRNA(Thr). Also edits incorrectly charged L-seryl-tRNA(Thr). The polypeptide is Threonine--tRNA ligase (Nitrosococcus oceani (strain ATCC 19707 / BCRC 17464 / JCM 30415 / NCIMB 11848 / C-107)).